A 981-amino-acid polypeptide reads, in one-letter code: Serine/threonine-protein kinase D1044.8 (981 aa).

A Protein kinase domain is found at 453 to 725 (YELLDQLGAG…MCGVRLLEYL (273 aa)). Residues 459–467 (LGAGAFGCV) and Lys488 contribute to the ATP site. Asp591 serves as the catalytic Proton acceptor. The segment covering 735-746 (TSDMTASQSSYN) has biased composition (polar residues). Disordered stretches follow at residues 735-802 (TSDM…PSSI) and 823-847 (IPSRRRVQTCSTEHPARSSSSTELK). Low complexity predominate over residues 752–762 (SPSSLNSSTSS). Residues 830–847 (QTCSTEHPARSSSSTELK) are compositionally biased toward polar residues.

The protein belongs to the protein kinase superfamily. NEK Ser/Thr protein kinase family. NIMA subfamily. It depends on Mg(2+) as a cofactor.

The catalysed reaction is L-seryl-[protein] + ATP = O-phospho-L-seryl-[protein] + ADP + H(+). It carries out the reaction L-threonyl-[protein] + ATP = O-phospho-L-threonyl-[protein] + ADP + H(+). In Caenorhabditis elegans, this protein is Serine/threonine-protein kinase D1044.8 (nekl-4).